Consider the following 436-residue polypeptide: Cytokine receptor-like factor 3 (436 aa).

Residues 9–87 are a coiled coil; sequence LMQEAWESID…VSAIEQENIK (79 aa). A Fibronectin type-III domain is found at 177 to 270; the sequence is PPVQIEELIE…LQTSRTTLVP (94 aa).

This sequence belongs to the cytokine receptor-like factor 3 family.

The protein resides in the cytoplasm. Functionally, may play a role in the negative regulation of cell cycle progression. In Xenopus laevis (African clawed frog), this protein is Cytokine receptor-like factor 3 (crlf3).